A 152-amino-acid polypeptide reads, in one-letter code: UPF0735 ACT domain-containing protein CTC_00116 (152 aa).

The region spanning 76-151 (IISVTLNHRP…NVIKLDLIAM (76 aa)) is the ACT domain.

It belongs to the UPF0735 family.

In Clostridium tetani (strain Massachusetts / E88), this protein is UPF0735 ACT domain-containing protein CTC_00116.